A 625-amino-acid chain; its full sequence is tRNA uridine 5-carboxymethylaminomethyl modification enzyme MnmG (625 aa).

FAD is bound by residues 10-15, Val122, and Ser177; that span reads GGGHAG. NAD(+) is bound at residue 271–285; it reads GPRYCPSIEDKVNRF. Gln368 lines the FAD pocket.

This sequence belongs to the MnmG family. As to quaternary structure, homodimer. Heterotetramer of two MnmE and two MnmG subunits. FAD is required as a cofactor.

Its subcellular location is the cytoplasm. Its function is as follows. NAD-binding protein involved in the addition of a carboxymethylaminomethyl (cmnm) group at the wobble position (U34) of certain tRNAs, forming tRNA-cmnm(5)s(2)U34. This Wolinella succinogenes (strain ATCC 29543 / DSM 1740 / CCUG 13145 / JCM 31913 / LMG 7466 / NCTC 11488 / FDC 602W) (Vibrio succinogenes) protein is tRNA uridine 5-carboxymethylaminomethyl modification enzyme MnmG.